Consider the following 123-residue polypeptide: MAKLTKETFVESLKEMSIKEVMELVEAMKEEFGVDPAAAVAVAAAPGEAAEAAKTSVKVVLKADNGKKVQIIKAVKDLLGGSLMDAKKIVDNLPAVVKENIKPEEAEPIRAALVEAGAEVSVE.

This sequence belongs to the bacterial ribosomal protein bL12 family. As to quaternary structure, homodimer. Part of the ribosomal stalk of the 50S ribosomal subunit. Forms a multimeric L10(L12)X complex, where L10 forms an elongated spine to which 2 to 4 L12 dimers bind in a sequential fashion. Binds GTP-bound translation factors.

Its function is as follows. Forms part of the ribosomal stalk which helps the ribosome interact with GTP-bound translation factors. Is thus essential for accurate translation. In Mycoplasmopsis synoviae (strain 53) (Mycoplasma synoviae), this protein is Large ribosomal subunit protein bL12.